The primary structure comprises 370 residues: MEVSNLSGATPGLAFPPGPESCSDSPSSGRSMGSTPGGLILPGREPPFSAFTVLVVTLLVLLIAATFLWNLLVLVTILRVRAFHRVPHNLVASTAVSDVLVAVLVMPLSLVSELSAGRRWQLGRSLCHVWISFDVLCCTASIWNVAAIALDRYWTITRHLQYTLRTRSRASALMIAITWALSALIALAPLLFGWGEAYDARLQRCQVSQEPSYAVFSTCGAFYLPLAVVLFVYWKIYKAAKFRFGRRRRAVVPLPATTQAKEAPPESEMVFTARRRATVTFQTSGDSWREQKEKRAAMMVGILIGVFVLCWIPFFLTELISPLCACSLPPIWKSIFLWLGYSNSFFNPLIYTAFNKNYNNAFKSLFTKQR.

The segment at 1–36 (MEVSNLSGATPGLAFPPGPESCSDSPSSGRSMGSTP) is disordered. Topologically, residues 1–48 (MEVSNLSGATPGLAFPPGPESCSDSPSSGRSMGSTPGGLILPGREPPF) are extracellular. Residue Asn5 is glycosylated (N-linked (GlcNAc...) asparagine). A compositionally biased stretch (low complexity) spans 20 to 36 (ESCSDSPSSGRSMGSTP). Residues 49 to 75 (SAFTVLVVTLLVLLIAATFLWNLLVLV) traverse the membrane as a helical segment. The Cytoplasmic segment spans residues 76–88 (TILRVRAFHRVPH). The helical transmembrane segment at 89 to 115 (NLVASTAVSDVLVAVLVMPLSLVSELS) threads the bilayer. Over 116–127 (AGRRWQLGRSLC) the chain is Extracellular. Cys127 and Cys205 form a disulfide bridge. The helical transmembrane segment at 128 to 150 (HVWISFDVLCCTASIWNVAAIAL) threads the bilayer. Asp134 contributes to the serotonin binding site. Topologically, residues 151–168 (DRYWTITRHLQYTLRTRS) are cytoplasmic. Residues 169–189 (RASALMIAITWALSALIALAP) form a helical membrane-spanning segment. The Extracellular segment spans residues 190–211 (LLFGWGEAYDARLQRCQVSQEP). A helical membrane pass occupies residues 212–233 (SYAVFSTCGAFYLPLAVVLFVY). The Cytoplasmic portion of the chain corresponds to 234-300 (WKIYKAAKFR…QKEKRAAMMV (67 aa)). A helical transmembrane segment spans residues 301–325 (GILIGVFVLCWIPFFLTELISPLCA). The Extracellular portion of the chain corresponds to 326–327 (CS). A helical membrane pass occupies residues 328 to 352 (LPPIWKSIFLWLGYSNSFFNPLIYT). The Cytoplasmic portion of the chain corresponds to 353-370 (AFNKNYNNAFKSLFTKQR).

The protein belongs to the G-protein coupled receptor 1 family. As to expression, expressed predominantly in the central nervous system; in the hippocampus, habenula, and the doral raphe.

It localises to the cell membrane. Its function is as follows. G-protein coupled receptor for 5-hydroxytryptamine (serotonin), a biogenic hormone that functions as a neurotransmitter, a hormone and a mitogen. Also functions as a receptor for ergot alkaloid derivatives and other psychoactive substances. Ligand binding causes a conformation change that triggers signaling via guanine nucleotide-binding proteins (G proteins) and modulates the activity of downstream effectors. Htr5b is coupled to G(i)/G(o) G alpha proteins and mediates inhibitory neurotransmission: signaling inhibits adenylate cyclase activity and activates a phosphatidylinositol-calcium second messenger system that regulates the release of Ca(2+) ions from intracellular stores. In Mus musculus (Mouse), this protein is 5-hydroxytryptamine receptor 5B.